The following is a 630-amino-acid chain: 1-deoxy-D-xylulose-5-phosphate synthase (630 aa).

Residues H72 and 113 to 115 each bind thiamine diphosphate; that span reads GHS. D144 serves as a coordination point for Mg(2+). Residues 145 to 146, N173, Y284, and E367 each bind thiamine diphosphate; that span reads GA. N173 is a Mg(2+) binding site.

Belongs to the transketolase family. DXPS subfamily. In terms of assembly, homodimer. It depends on Mg(2+) as a cofactor. Thiamine diphosphate is required as a cofactor.

The catalysed reaction is D-glyceraldehyde 3-phosphate + pyruvate + H(+) = 1-deoxy-D-xylulose 5-phosphate + CO2. It functions in the pathway metabolic intermediate biosynthesis; 1-deoxy-D-xylulose 5-phosphate biosynthesis; 1-deoxy-D-xylulose 5-phosphate from D-glyceraldehyde 3-phosphate and pyruvate: step 1/1. Catalyzes the acyloin condensation reaction between C atoms 2 and 3 of pyruvate and glyceraldehyde 3-phosphate to yield 1-deoxy-D-xylulose-5-phosphate (DXP). In Bacillus cereus (strain G9842), this protein is 1-deoxy-D-xylulose-5-phosphate synthase.